The following is a 1031-amino-acid chain: Putative protein TIC 214 N-terminal part (1031 aa).

6 consecutive transmembrane segments (helical) span residues 11–31 (ILWAQILSWISISGPLILFGL), 68–88 (TLGQLIILISIFYSPLYIMLL), 92–112 (AITLITLPYVLFYWYEIKDLS), 127–147 (GIIQIFLNSFLFQIFNPILLP), 166–186 (SFFVISLFCGWLGGNILLINL), and 212–232 (TFSIIIFVACLSYLGKFPVPF).

Belongs to the TIC214 family. Part of the Tic complex.

It is found in the plastid. Its subcellular location is the chloroplast inner membrane. In terms of biological role, involved in protein precursor import into chloroplasts. May be part of an intermediate translocation complex acting as a protein-conducting channel at the inner envelope. This Anthoceros angustus (Hornwort) protein is Putative protein TIC 214 N-terminal part.